We begin with the raw amino-acid sequence, 136 residues long: Holo-[acyl-carrier-protein] synthase (136 aa).

Residues Asp-8 and Glu-57 each contribute to the Mg(2+) site.

It belongs to the P-Pant transferase superfamily. AcpS family. Mg(2+) serves as cofactor.

It localises to the cytoplasm. It catalyses the reaction apo-[ACP] + CoA = holo-[ACP] + adenosine 3',5'-bisphosphate + H(+). Transfers the 4'-phosphopantetheine moiety from coenzyme A to a Ser of acyl-carrier-protein. The polypeptide is Holo-[acyl-carrier-protein] synthase (Methylorubrum extorquens (strain CM4 / NCIMB 13688) (Methylobacterium extorquens)).